A 248-amino-acid polypeptide reads, in one-letter code: Fasciclin-like arabinogalactan protein 19 (248 aa).

The signal sequence occupies residues 1–29 (MAKISSASCFRAIFLGALIILCLPHPSTG). Residues 35–166 (LERAIAILRV…IAVHGLADLL (132 aa)) form the FAS1 domain. N-linked (GlcNAc...) asparagine glycans are attached at residues asparagine 114 and asparagine 136. Positions 213–226 (SPSVEEVSPSPSWG) are enriched in low complexity. Residues 213–248 (SPSVEEVSPSPSWGEGEEDFIVGDEGGPLDGRNNGF) are disordered.

It belongs to the fasciclin-like AGP family.

The protein resides in the secreted. Functionally, may be a cell surface adhesion protein. The sequence is that of Fasciclin-like arabinogalactan protein 19 (FLA19) from Arabidopsis thaliana (Mouse-ear cress).